Here is a 251-residue protein sequence, read N- to C-terminus: 2,3-bisphosphoglycerate-dependent phosphoglycerate mutase (251 aa).

Substrate is bound by residues arginine 11–asparagine 18, threonine 24–glycine 25, arginine 63, glutamate 90–tyrosine 93, lysine 101, arginine 117–arginine 118, and glycine 185–asparagine 186. The active-site Tele-phosphohistidine intermediate is the histidine 12. Glutamate 90 serves as the catalytic Proton donor/acceptor. The interval arginine 117–alanine 142 is disordered.

Belongs to the phosphoglycerate mutase family. BPG-dependent PGAM subfamily.

It catalyses the reaction (2R)-2-phosphoglycerate = (2R)-3-phosphoglycerate. Its pathway is carbohydrate degradation; glycolysis; pyruvate from D-glyceraldehyde 3-phosphate: step 3/5. In terms of biological role, catalyzes the interconversion of 2-phosphoglycerate and 3-phosphoglycerate. The chain is 2,3-bisphosphoglycerate-dependent phosphoglycerate mutase from Clavibacter michiganensis subsp. michiganensis (strain NCPPB 382).